The sequence spans 396 residues: Cytochrome b (396 aa).

The next 4 membrane-spanning stretches (helical) occupy residues 32–52 (FGSL…TLAM), 76–98 (WLLR…LHIG), 113–133 (LWSI…IGYV), and 179–199 (FFSL…MHLL). Heme b-binding residues include H82 and H96. The heme b site is built by H183 and H197. Residue H202 participates in a ubiquinone binding. A run of 4 helical transmembrane segments spans residues 225 to 245 (FTSK…IFVF), 289 to 309 (LGGV…ALIH), 321 to 341 (LLNL…WVGA), and 348 to 368 (YILI…ILMI).

It belongs to the cytochrome b family. In terms of assembly, fungal cytochrome b-c1 complex contains 10 subunits; 3 respiratory subunits, 2 core proteins and 5 low-molecular weight proteins. Cytochrome b-c1 complex is a homodimer. Requires heme b as cofactor.

It localises to the mitochondrion inner membrane. Component of the ubiquinol-cytochrome c reductase complex (complex III or cytochrome b-c1 complex) that is part of the mitochondrial respiratory chain. The b-c1 complex mediates electron transfer from ubiquinol to cytochrome c. Contributes to the generation of a proton gradient across the mitochondrial membrane that is then used for ATP synthesis. The protein is Cytochrome b (cob) of Spizellomyces punctatus.